Consider the following 545-residue polypeptide: Phenylalanine--tRNA ligase beta subunit (545 aa).

The 77-residue stretch at L266–A342 folds into the B5 domain. Residues D320, D326, E329, and D330 each coordinate Mg(2+).

Belongs to the phenylalanyl-tRNA synthetase beta subunit family. Type 2 subfamily. Tetramer of two alpha and two beta subunits. It depends on Mg(2+) as a cofactor.

Its subcellular location is the cytoplasm. It carries out the reaction tRNA(Phe) + L-phenylalanine + ATP = L-phenylalanyl-tRNA(Phe) + AMP + diphosphate + H(+). This chain is Phenylalanine--tRNA ligase beta subunit, found in Methanospirillum hungatei JF-1 (strain ATCC 27890 / DSM 864 / NBRC 100397 / JF-1).